A 120-amino-acid polypeptide reads, in one-letter code: Ribonuclease P protein component 2 (120 aa).

It belongs to the eukaryotic/archaeal RNase P protein component 2 family. In terms of assembly, consists of a catalytic RNA component and at least 4-5 protein subunits.

The protein localises to the cytoplasm. It carries out the reaction Endonucleolytic cleavage of RNA, removing 5'-extranucleotides from tRNA precursor.. Functionally, part of ribonuclease P, a protein complex that generates mature tRNA molecules by cleaving their 5'-ends. This Methanobrevibacter smithii (strain ATCC 35061 / DSM 861 / OCM 144 / PS) protein is Ribonuclease P protein component 2.